The chain runs to 600 residues: Rhesus-like glycoprotein B (600 aa).

Residues 1-16 lie on the Cytoplasmic side of the membrane; the sequence is MSKDEHKLPLSKRKES. Residues 17–37 form a helical membrane-spanning segment; that stretch reads IIFMMILFAFQVFMVVLFSVW. The Extracellular portion of the chain corresponds to 38 to 73; sequence VRYSKNEVNYSTLTPEQLQELEATGGVVQEEVTNIY. A glycan (N-linked (GlcNAc...) asparagine) is linked at N46. The chain crosses the membrane as a helical span at residues 74 to 94; it reads GYFRDINIMIFFGFGFLMTFL. The Cytoplasmic portion of the chain corresponds to 95 to 102; that stretch reads RRYGYSAL. A helical membrane pass occupies residues 103-123; the sequence is GYTFIISALVAQWSVLIYGFF. The Extracellular segment spans residues 124–145; it reads ETVDHKNDHGGDYASTFEMSQT. Residues 146 to 166 traverse the membrane as a helical segment; the sequence is VLLQGLFCAGAVMISYGAVLG. At 167–170 the chain is on the cytoplasmic side; sequence RVTP. The helical transmembrane segment at 171 to 191 threads the bilayer; it reads LQMLVVGIFEPIFYFLNMFIG. At 192-199 the chain is on the extracellular side; the sequence is EMNLEAID. Residues 200 to 220 traverse the membrane as a helical segment; the sequence is VGGGMYIHLFGSVFGLTIAWF. Over 221-240 the chain is Cytoplasmic; the sequence is LTDKKSKDCEDNSPSYTGDY. Residues 241–261 traverse the membrane as a helical segment; the sequence is FAMAGTLFLWMMWPSFNAAIA. The Extracellular portion of the chain corresponds to 262–274; sequence PLGEPQFRAIANT. The chain crosses the membrane as a helical span at residues 275 to 295; the sequence is FLSLTASTIATFIVTRLFGHL. Residues 296 to 303 lie on the Cytoplasmic side of the membrane; sequence GHKIDMVH. Residues 304 to 323 traverse the membrane as a helical segment; the sequence is VQNSSLAGGVVQGCLAHMNI. Residues 324–325 lie on the Extracellular side of the membrane; sequence NP. A helical membrane pass occupies residues 326–346; the sequence is GGAIGMGFLAGVISVIGYLFI. The Cytoplasmic portion of the chain corresponds to 347-361; that stretch reads SPFLQRRFNIQDTCG. Residues 362–382 traverse the membrane as a helical segment; the sequence is IHNLHFMPGFIGSIAACIAAW. Residues 383-411 are Extracellular-facing; it reads KGLNDRSLYNPIEFNQIFRAGEDQARNNA. Residues 412-432 traverse the membrane as a helical segment; sequence AATFISIGIAIAGGLFVGMIL. Residues 433-600 are Cytoplasmic-facing; that stretch reads KALKKVGGLK…SSTNSPTSKV (168 aa). Positions 471–600 are disordered; the sequence is NLPMPTTDNG…SSTNSPTSKV (130 aa). Positions 498–510 are enriched in basic and acidic residues; that stretch reads NKKENGYRRDLIR. Over residues 519-529 the composition is skewed to low complexity; sequence EQSTDSSYSDS. The span at 540-554 shows a compositional bias: basic residues; it reads RIRKLAKKSYRRSKK. Over residues 555-566 the composition is skewed to basic and acidic residues; that stretch reads SHSEHQPQHQPE. Positions 571–580 are enriched in low complexity; the sequence is NNNNNNNNNN. The segment covering 581–600 has biased composition (polar residues); that stretch reads ATAETTDNGGSSTNSPTSKV.

Belongs to the ammonium transporter (TC 2.A.49) family. Rh subfamily.

Its subcellular location is the membrane. Its function is as follows. May be a carbon dioxide/bicarbonate transporter. This chain is Rhesus-like glycoprotein B (rhgB), found in Dictyostelium discoideum (Social amoeba).